The primary structure comprises 315 residues: Acetyl-coenzyme A carboxylase carboxyl transferase subunit alpha (315 aa).

A CoA carboxyltransferase C-terminal domain is found at 38–292 (RLQKKSNELT…KLRLKEDLAE (255 aa)).

This sequence belongs to the AccA family. In terms of assembly, acetyl-CoA carboxylase is a heterohexamer composed of biotin carboxyl carrier protein (AccB), biotin carboxylase (AccC) and two subunits each of ACCase subunit alpha (AccA) and ACCase subunit beta (AccD).

The protein localises to the cytoplasm. It catalyses the reaction N(6)-carboxybiotinyl-L-lysyl-[protein] + acetyl-CoA = N(6)-biotinyl-L-lysyl-[protein] + malonyl-CoA. It participates in lipid metabolism; malonyl-CoA biosynthesis; malonyl-CoA from acetyl-CoA: step 1/1. Its function is as follows. Component of the acetyl coenzyme A carboxylase (ACC) complex. First, biotin carboxylase catalyzes the carboxylation of biotin on its carrier protein (BCCP) and then the CO(2) group is transferred by the carboxyltransferase to acetyl-CoA to form malonyl-CoA. In Haemophilus influenzae (strain 86-028NP), this protein is Acetyl-coenzyme A carboxylase carboxyl transferase subunit alpha.